Here is a 69-residue protein sequence, read N- to C-terminus: UPF0337 protein DIP1660 (69 aa).

Basic and acidic residues-rich tracts occupy residues 1 to 19 (MSDFENKIEELGGKAKEAV) and 30 to 41 (DEGRADQTKADV). The segment at 1–42 (MSDFENKIEELGGKAKEAVGEATENEQLADEGRADQTKADVK) is disordered.

The protein belongs to the UPF0337 (CsbD) family.

The sequence is that of UPF0337 protein DIP1660 from Corynebacterium diphtheriae (strain ATCC 700971 / NCTC 13129 / Biotype gravis).